Here is a 161-residue protein sequence, read N- to C-terminus: MEKMPITKSGFENLKKELEHLKCVLIPANIKDIEIARAHGDLSENAEYTAAKEKQSFLHGKLQELENNLALSNVIDLKMLSDDRIVFGATVIIEEASTGKQTNYQLVGPFESNISENKISVTSPIGKALIGKSIGDEVKVHTPGGIRNFEVVDIYINPSEL.

Residues 46 to 71 (AEYTAAKEKQSFLHGKLQELENNLAL) are a coiled coil.

The protein belongs to the GreA/GreB family.

Necessary for efficient RNA polymerase transcription elongation past template-encoded arresting sites. The arresting sites in DNA have the property of trapping a certain fraction of elongating RNA polymerases that pass through, resulting in locked ternary complexes. Cleavage of the nascent transcript by cleavage factors such as GreA or GreB allows the resumption of elongation from the new 3'terminus. GreA releases sequences of 2 to 3 nucleotides. The chain is Transcription elongation factor GreA from Syntrophus aciditrophicus (strain SB).